Consider the following 663-residue polypeptide: 72 kDa type IV collagenase (663 aa).

Positions 1–26 are cleaved as a signal peptide; the sequence is MKTHSVFGFFFKVLLIQVYLFNKTLA. The propeptide at 27-106 is activation peptide; the sequence is APSPIIKFPG…PRCGNPDVAN (80 aa). Positions 97–104 match the Cysteine switch motif; it reads PRCGNPDV. A Zn(2+)-binding site is contributed by C99. The collagenase-like 1 stretch occupies residues 107 to 218; it reads YNFFPRKPKW…LWTLGEGQVV (112 aa). Residues D131 and D165 each coordinate Ca(2+). 2 residues coordinate Zn(2+): H175 and D177. Ca(2+) is bound by residues D182 and G183. H190 provides a ligand contact to Zn(2+). 3 residues coordinate Ca(2+): G197, G199, and D201. H203 is a Zn(2+) binding site. Ca(2+) is bound by residues D205, D206, and E208. The tract at residues 219–393 is collagen-binding; that stretch reads RVKYGNADGE…WGFCPDQGYS (175 aa). Fibronectin type-II domains are found at residues 225 to 273, 283 to 331, and 341 to 389; these read ADGE…FCPH, GDGQ…FCPE, and SEGA…FCPD. 6 disulfide bridges follow: C230-C256, C244-C271, C288-C314, C302-C329, C346-C372, and C360-C387. Positions 394 to 468 are collagenase-like 2; that stretch reads LFLVAAHEFG…GPRPTLGPVT (75 aa). A Zn(2+)-binding site is contributed by H400. The active site involves E401. Zn(2+) contacts are provided by H404 and H410. The interval 445-464 is disordered; sequence SPDVEPGPGPGPGPGPRPTL. The span at 449-463 shows a compositional bias: pro residues; the sequence is EPGPGPGPGPGPRPT. C472 and C663 form a disulfide bridge. Hemopexin repeat units follow at residues 475–519, 520–566, 568–616, and 617–663; these read DIVF…WPDL, PEKI…GLPP, VQRI…WNGV, and PDNL…WLGC. The Ca(2+) site is built by D479, D524, D572, and D621.

The protein belongs to the peptidase M10A family. In terms of assembly, ligand for integrin alpha-V/beta-3. Ca(2+) serves as cofactor. Zn(2+) is required as a cofactor. In terms of processing, the propeptide is processed by MMP14 (MT-MMP1) and MMP16 (MT-MMP3). Produced by normal skin fibroblasts.

The protein localises to the secreted. The protein resides in the extracellular space. It localises to the extracellular matrix. It carries out the reaction Cleavage of gelatin type I and collagen types IV, V, VII, X. Cleaves the collagen-like sequence Pro-Gln-Gly-|-Ile-Ala-Gly-Gln.. The chain is 72 kDa type IV collagenase (MMP2) from Gallus gallus (Chicken).